The primary structure comprises 495 residues: RuBisCO large subunit-binding protein subunit alpha (495 aa).

This sequence belongs to the chaperonin (HSP60) family. Oligomer of probably six alpha and six beta subunits.

Its subcellular location is the plastid. It localises to the chloroplast. Functionally, this protein binds RuBisCO small and large subunits and is implicated in the assembly of the enzyme oligomer. This chain is RuBisCO large subunit-binding protein subunit alpha, found in Ricinus communis (Castor bean).